The following is a 77-amino-acid chain: Translation initiation factor IF-1, chloroplastic (77 aa).

The S1-like domain maps to 1-71 (MKEQKWVHEG…TRGRIIYRLR (71 aa)).

The protein belongs to the IF-1 family. In terms of assembly, component of the 30S ribosomal translation pre-initiation complex which assembles on the 30S ribosome in the order IF-2 and IF-3, IF-1 and N-formylmethionyl-tRNA(fMet); mRNA recruitment can occur at any time during PIC assembly.

It is found in the plastid. It localises to the chloroplast. In terms of biological role, one of the essential components for the initiation of protein synthesis. Stabilizes the binding of IF-2 and IF-3 on the 30S subunit to which N-formylmethionyl-tRNA(fMet) subsequently binds. Helps modulate mRNA selection, yielding the 30S pre-initiation complex (PIC). Upon addition of the 50S ribosomal subunit IF-1, IF-2 and IF-3 are released leaving the mature 70S translation initiation complex. This is Translation initiation factor IF-1, chloroplastic from Cercidiphyllum japonicum (Katsura tree).